We begin with the raw amino-acid sequence, 491 residues long: COP9 signalosome complex subunit 1 (491 aa).

The PCI domain maps to 269-431 (CLLLASFDHC…KILYARDVDQ (163 aa)). A disordered region spans residues 465 to 491 (HVKSPPREGSQGELTPANSQSRMSTNM). Phosphoserine is present on residues S468 and S474. Polar residues predominate over residues 476–491 (GELTPANSQSRMSTNM). At T479 the chain carries Phosphothreonine. S483 is subject to Phosphoserine.

This sequence belongs to the CSN1 family. In terms of assembly, component of the CSN complex, composed of COPS1/GPS1, COPS2, COPS3, COPS4, COPS5, COPS6, COPS7 (COPS7A or COPS7B), COPS8 and COPS9 isoform 1. In the complex, it probably interacts directly with COPS2, COPS3, COPS4 and COPS5. Interacts directly with inositol kinase ITPK1. Interacts with CAPN8. Interacts with USP48. Interacts with ASB4; this interaction negatively regulates GPS1. In terms of tissue distribution, widely expressed.

The protein localises to the cytoplasm. It localises to the nucleus. Its function is as follows. Essential component of the COP9 signalosome complex (CSN), a complex involved in various cellular and developmental processes. The CSN complex is an essential regulator of the ubiquitin (Ubl) conjugation pathway by mediating the deneddylation of the cullin subunits of SCF-type E3 ligase complexes, leading to decrease the Ubl ligase activity of SCF-type complexes such as SCF, CSA or DDB2. The complex is also involved in phosphorylation of p53/TP53, c-jun/JUN, IkappaBalpha/NFKBIA, ITPK1 and IRF8/ICSBP, possibly via its association with CK2 and PKD kinases. CSN-dependent phosphorylation of TP53 and JUN promotes and protects degradation by the Ubl system, respectively. Suppresses G-protein- and mitogen-activated protein kinase-mediated signal transduction. The protein is COP9 signalosome complex subunit 1 (GPS1) of Homo sapiens (Human).